The primary structure comprises 432 residues: MKFTLSTVTKCSGRLGVLGGLDRLPNLSLQTPAFIFHTKGGSIPHLSKEAMQHVSGDPSCFLHLSISNTLHMQEAIKASRITIAEFIAQSNCATLLFVRDPSEPPIPGLPEKDSLPIYTRNGRRNITLEQYMTLVETFRPDAYVPLYDGDTDASSSKKRDQKSLDRTEKFVEQCLEWHRKSDALQSSCLIGPVVGGYNEKLREQSVAFLRQSDDAFAGYLIEGLHMHGPSVARMDGSAALGIVANVCKQLPEAKVRLCFGSYDPALVLEMVAAGVDVFDTSYVYLKAAQEHRALVFSFDVTSTEQEHVTELDTTDARWAEDFGPLLPGCKCYTCQKHSRAYVHHLHNTREMLGPILLMMHNLHHYVEFFKAIRHHVANDSLPELRNHLAGQKSLPPYEPPKEEKLPMPAAQKAELMEPMEDLGEKQNKKQRA.

Residues Cys-329, Cys-331, Cys-334, and His-360 each contribute to the Zn(2+) site. The segment at 390–432 (GQKSLPPYEPPKEEKLPMPAAQKAELMEPMEDLGEKQNKKQRA) is disordered. Basic and acidic residues predominate over residues 422–432 (LGEKQNKKQRA).

It belongs to the queuine tRNA-ribosyltransferase family. QTRT2 subfamily. As to quaternary structure, heterodimer of a catalytic subunit and an accessory subunit. Zn(2+) is required as a cofactor.

It localises to the cytoplasm. Non-catalytic subunit of the queuine tRNA-ribosyltransferase (TGT) that catalyzes the base-exchange of a guanine (G) residue with queuine (Q) at position 34 (anticodon wobble position) in tRNAs with GU(N) anticodons (tRNA-Asp, -Asn, -His and -Tyr), resulting in the hypermodified nucleoside queuosine (7-(((4,5-cis-dihydroxy-2-cyclopenten-1-yl)amino)methyl)-7-deazaguanosine). The sequence is that of Queuine tRNA-ribosyltransferase accessory subunit 2 from Anopheles gambiae (African malaria mosquito).